The sequence spans 247 residues: ATP synthase subunit a, chloroplastic (247 aa).

The next 5 membrane-spanning stretches (helical) occupy residues 38–58 (QVLITSWVVIAILLGSATLAV), 95–115 (VPFIGTMFLFIFVSNWSGALL), 134–154 (INTTVALALLTSVAYFYAGIS), 199–219 (LVVVVLVSLVPLVVPIPVMFL), and 220–240 (GLFTSGIQALIFATLAAAYIG).

It belongs to the ATPase A chain family. In terms of assembly, F-type ATPases have 2 components, CF(1) - the catalytic core - and CF(0) - the membrane proton channel. CF(1) has five subunits: alpha(3), beta(3), gamma(1), delta(1), epsilon(1). CF(0) has four main subunits: a, b, b' and c.

Its subcellular location is the plastid. It localises to the chloroplast thylakoid membrane. In terms of biological role, key component of the proton channel; it plays a direct role in the translocation of protons across the membrane. This chain is ATP synthase subunit a, chloroplastic, found in Daucus carota (Wild carrot).